We begin with the raw amino-acid sequence, 138 residues long: MAKPILRIGSRKNTRSGSRKNVRRIPKGVIHVQASFNNTIVTVTDVRGRVISWSSAGTCGFRGTRRGTPFAAQTAAGNAIRAVVDQGMQRAEVRIKGPGLGRDAALRAIRRSGILLSFVRDVTPMPHNGCRPPKKRRV.

A disordered region spans residues 1–23; it reads MAKPILRIGSRKNTRSGSRKNVR. The segment covering 9 to 23 has biased composition (basic residues); it reads GSRKNTRSGSRKNVR.

This sequence belongs to the universal ribosomal protein uS11 family. As to quaternary structure, part of the 30S ribosomal subunit.

The protein localises to the plastid. Its subcellular location is the chloroplast. The polypeptide is Small ribosomal subunit protein uS11c (Crucihimalaya wallichii (Rock-cress)).